Reading from the N-terminus, the 298-residue chain is Ethanolamine ammonia-lyase small subunit (298 aa).

Val210, Glu231, and Cys261 together coordinate adenosylcob(III)alamin.

This sequence belongs to the EutC family. As to quaternary structure, the basic unit is a heterodimer which dimerizes to form tetramers. The heterotetramers trimerize; 6 large subunits form a core ring with 6 small subunits projecting outwards. The cofactor is adenosylcob(III)alamin.

Its subcellular location is the bacterial microcompartment. The enzyme catalyses ethanolamine = acetaldehyde + NH4(+). It participates in amine and polyamine degradation; ethanolamine degradation. In terms of biological role, catalyzes the deamination of various vicinal amino-alcohols to oxo compounds. Allows this organism to utilize ethanolamine as the sole source of nitrogen and carbon in the presence of external vitamin B12. This chain is Ethanolamine ammonia-lyase small subunit, found in Salmonella heidelberg (strain SL476).